Here is a 381-residue protein sequence, read N- to C-terminus: MSLNLFWFLPTHGDGHYLGSDAGARPVDHGYLQQIAQAADRLGFTGVLIPTGRSCEDAWLVAASMIPVTQRLKFLVALRPSVVSPTVAARQAATLDRLSNGRALFNLVTGSDPQELAGDGVFLDHTARYEASAEFTRVWRRLLEGEKVDFEGKHIKVRGAQLLFPPVQQPRPPLYFGGSSDVAQDLAAEQVDLYLTWGEPPEQVKEKIAQVRAKAAAHGRTVRFGIRLHVIVRETTEEAWQAADRLIAHLDDETIAKAQAAFARQDSVGQQRMAALHGGRRDQLEISPNLWAGVGLVRGGAGTALVGDGPTVAARINEYAALGIDSFILSGYPHLEEAYRVGEFLFPHLDVAIPDVPQPRPLTAQGEAVANEFIPRRVAQS.

This sequence belongs to the SsuD family. As to quaternary structure, homotetramer.

The enzyme catalyses an alkanesulfonate + FMNH2 + O2 = an aldehyde + FMN + sulfite + H2O + 2 H(+). In terms of biological role, catalyzes the desulfonation of aliphatic sulfonates. The chain is Alkanesulfonate monooxygenase from Cronobacter sakazakii (strain ATCC BAA-894) (Enterobacter sakazakii).